The following is a 332-amino-acid chain: Biotin synthase (332 aa).

The 229-residue stretch at 51-279 folds into the Radical SAM core domain; the sequence is YKVQLASLLS…LSRVRLSAGR (229 aa). 3 residues coordinate [4Fe-4S] cluster: Cys-66, Cys-70, and Cys-73. The [2Fe-2S] cluster site is built by Cys-110, Cys-142, Cys-202, and Arg-274.

This sequence belongs to the radical SAM superfamily. Biotin synthase family. In terms of assembly, homodimer. The cofactor is [4Fe-4S] cluster. Requires [2Fe-2S] cluster as cofactor.

It catalyses the reaction (4R,5S)-dethiobiotin + (sulfur carrier)-SH + 2 reduced [2Fe-2S]-[ferredoxin] + 2 S-adenosyl-L-methionine = (sulfur carrier)-H + biotin + 2 5'-deoxyadenosine + 2 L-methionine + 2 oxidized [2Fe-2S]-[ferredoxin]. Its pathway is cofactor biosynthesis; biotin biosynthesis; biotin from 7,8-diaminononanoate: step 2/2. Catalyzes the conversion of dethiobiotin (DTB) to biotin by the insertion of a sulfur atom into dethiobiotin via a radical-based mechanism. This Prochlorococcus marinus (strain MIT 9211) protein is Biotin synthase.